The chain runs to 240 residues: MRTLFIGDLHLSADRLDITQAFTRFLDTELDDADALYILGDLFEVWVGDDIALPFALELAEKLKQVSQKLPVYFIHGNRDFMLGKQYARAAGMQILPEVTCLNLYGIETVILHGDSLCTLDKAYQRFRKLRSLSLARWLYGCLSKKTRQGIADKIRSNSKSSNQQKSYTIMDVEPNAVDALFAKTHTKHMIHGHTHRPAIHQLANGCQRIVVGDWYEQGSVLSVSAEGINLQSLPFEQTT.

5 residues coordinate Mn(2+): aspartate 8, histidine 10, aspartate 41, asparagine 78, and histidine 113. Asparagine 78–arginine 79 contributes to the substrate binding site. Substrate is bound by residues aspartate 121, serine 159, asparagine 163, lysine 166, and histidine 194. Positions 194 and 196 each coordinate Mn(2+).

Belongs to the LpxH family. Requires Mn(2+) as cofactor.

It localises to the cell inner membrane. The enzyme catalyses UDP-2-N,3-O-bis[(3R)-3-hydroxytetradecanoyl]-alpha-D-glucosamine + H2O = 2-N,3-O-bis[(3R)-3-hydroxytetradecanoyl]-alpha-D-glucosaminyl 1-phosphate + UMP + 2 H(+). It functions in the pathway glycolipid biosynthesis; lipid IV(A) biosynthesis; lipid IV(A) from (3R)-3-hydroxytetradecanoyl-[acyl-carrier-protein] and UDP-N-acetyl-alpha-D-glucosamine: step 4/6. In terms of biological role, hydrolyzes the pyrophosphate bond of UDP-2,3-diacylglucosamine to yield 2,3-diacylglucosamine 1-phosphate (lipid X) and UMP by catalyzing the attack of water at the alpha-P atom. Involved in the biosynthesis of lipid A, a phosphorylated glycolipid that anchors the lipopolysaccharide to the outer membrane of the cell. This is UDP-2,3-diacylglucosamine hydrolase from Shewanella baltica (strain OS155 / ATCC BAA-1091).